We begin with the raw amino-acid sequence, 78 residues long: Sperm-specific protein Phi-0 (78 aa).

Basic residues-rich tracts occupy residues 1 to 21, 31 to 57, and 64 to 78; these read MVARRQTKKARKPAARRRSAA, AASRRRPKSAKKAKPAARRRSSVKPKA, and VRRRSRRIRRASVSK. The interval 1-78 is disordered; that stretch reads MVARRQTKKA…RRIRRASVSK (78 aa).

Its subcellular location is the nucleus. The protein localises to the chromosome. Its function is as follows. Involved in nuclear basic protein transition: histones are replaced by spermatid specific proteins which are themselves replaced by protamines in late spermatids. This Holothuria tubulosa (Tubular sea cucumber) protein is Sperm-specific protein Phi-0.